A 361-amino-acid polypeptide reads, in one-letter code: Probable cadicidin biosynthesis thioesterase (361 aa).

One can recognise a 4Fe-4S ferredoxin-type domain in the interval 2–29; it reads RVTVDSEQCVGAGQCVLNAPEVFDQDDD. Residues 36-110 are disordered; it reads RADPTSGTTR…RRDSPVTTAD (75 aa). A compositionally biased stretch (basic residues) spans 46 to 61; the sequence is RSARRATCARRPRSSS. Basic and acidic residues-rich tracts occupy residues 62–74 and 94–104; these read RRTE…DRHR and TDRRQNHRRDS. Ser-201 is a catalytic residue.

It belongs to the thioesterase family.

It participates in antibiotic biosynthesis; candicidin biosynthesis. Its function is as follows. Probable thioesterase involved in the biosynthesis of candicidin. Could release the macrolide ring from the polyketide synthase. This is Probable cadicidin biosynthesis thioesterase from Streptomyces griseus.